We begin with the raw amino-acid sequence, 385 residues long: DNA double-strand break repair protein Mre11 (385 aa).

Positions 14, 16, and 58 each coordinate Mn(2+). His-94 serves as the catalytic Proton donor. 3 residues coordinate Mn(2+): His-180, His-216, and His-218.

Belongs to the MRE11/RAD32 family. In terms of assembly, homodimer. Forms a heterotetramer composed of two Mre11 subunits and two Rad50 subunits. Homodimerization facilitates DNA binding. Mn(2+) is required as a cofactor.

Nuclease activity is regulated by Rad50. The mirin-derivative PFM39, specifically inhibits the 3'-5' exonuclease activity. The N-alkylated mirin-derivatives PFM03 and PFM01 specifically inhibit the endonuclease activity. In terms of biological role, part of the Rad50/Mre11 complex, which is involved in the early steps of DNA double-strand break (DSB) repair. The complex may facilitate opening of the processed DNA ends to aid in the recruitment of HerA and NurA. Mre11 binds to DSB ends and has both double-stranded 3'-5' exonuclease activity and single-stranded endonuclease activity. The polypeptide is DNA double-strand break repair protein Mre11 (Thermotoga maritima (strain ATCC 43589 / DSM 3109 / JCM 10099 / NBRC 100826 / MSB8)).